The chain runs to 335 residues: Pro-cathepsin H (335 aa).

The first 22 residues, 1–22 (MWATLPLLCAGAWLLGVPVCGA), serve as a signal peptide directing secretion. Residues 23-97 (AELCVNSLEK…AEIKHKYLWS (75 aa)) constitute a propeptide, activation peptide. An N-linked (GlcNAc...) asparagine glycan is attached at N101. Disulfide bonds link C102–C327, C138–C181, C172–C214, and C272–C322. Positions 106–115 (KSNYLRGTGP) are excised as a propeptide. The active site involves C141. N-linked (GlcNAc...) asparagine glycosylation occurs at N230. Residues H281 and N301 contribute to the active site.

The protein belongs to the peptidase C1 family. Composed of a mini chain and a large chain. The large chain may be split into heavy and light chain. All chains are held together by disulfide bonds.

The protein resides in the lysosome. The enzyme catalyses Hydrolysis of proteins, acting as an aminopeptidase (notably, cleaving Arg-|-Xaa bonds) as well as an endopeptidase.. Its function is as follows. Important for the overall degradation of proteins in lysosomes. The polypeptide is Pro-cathepsin H (CTSH) (Homo sapiens (Human)).